The following is a 355-amino-acid chain: MTELKNDTYLRALLKQPVDYTPVWMMRQAGRYLPEYREVRKNAGDFMSVCKNAELACEVTIQPLRRFPLDAAILFSDILTIPDAMGLGLYFETGEGPKFERPITCKADVDKIAVPDPEDELGYVMNAVRTIRKELKGEVPLIGFSGSPWTLATYMIEGGSSKAFTKIKKMMFAEPQTLHLLLDKLADSVISYLNAQIAAGAQSVMVFDTWGGVLSPRDYNEFSLQYMAKIVDGLTRHNEGRQVPVTLFTKNGGMWLESIAATGCDAVGLDWTIDIENAKARVGDKVALQGNMDPSMLYAPLPRIEQEVSKILSGFGEGGTGHVFNLGHGIHPDVNPDHAGHFIESVHRLSKPYHK.

Substrate is bound by residues 27-31 (RQAGR), Asp77, Tyr154, Thr209, and His328.

It belongs to the uroporphyrinogen decarboxylase family. As to quaternary structure, homodimer.

It is found in the cytoplasm. It carries out the reaction uroporphyrinogen III + 4 H(+) = coproporphyrinogen III + 4 CO2. It functions in the pathway porphyrin-containing compound metabolism; protoporphyrin-IX biosynthesis; coproporphyrinogen-III from 5-aminolevulinate: step 4/4. Its function is as follows. Catalyzes the decarboxylation of four acetate groups of uroporphyrinogen-III to yield coproporphyrinogen-III. This Colwellia psychrerythraea (strain 34H / ATCC BAA-681) (Vibrio psychroerythus) protein is Uroporphyrinogen decarboxylase.